Reading from the N-terminus, the 359-residue chain is Fc receptor-like A (359 aa).

Residues 1–27 (MKLGCVLMAWALYLSLGVLWVAQMLLA) form the signal peptide. 2 Ig-like C2-type domains span residues 70–159 (PFHL…ETAS) and 170–257 (PAPI…PQLE). Disulfide bonds link C99–C143 and C192–C240. A disordered region spans residues 259–313 (RVQGASSSAAPPTLNPAPQKSAAPGTAPEEAPGPLPPPPTPSSEDPGFSSPLGMP). Residues 279-288 (SAAPGTAPEE) are compositionally biased toward low complexity. Residues 289–299 (APGPLPPPPTP) show a composition bias toward pro residues.

Monomer or homodimer; disulfide-linked. In terms of tissue distribution, expressed specifically in primary and secondary lymphoid tissues like lymph node, spleen and tonsil. Specifically expressed in B-cells with a high level in normal germinal center B-cells, centroblasts and in a subset of diffuse large B-cell lymphomas. Highly expressed in bone marrow B-cells and weakly in earlier B lineage cells. Expressed in pre-germinal and germinal center B-cells in secondary lymphoid tissues. Also expressed in melanoma and melanocytes.

The protein localises to the cytoplasm. Functionally, may be implicated in B-cell differentiation and lymphomagenesis. In Homo sapiens (Human), this protein is Fc receptor-like A (FCRLA).